The primary structure comprises 432 residues: Homogentisate 1,2-dioxygenase (432 aa).

H287 serves as the catalytic Proton acceptor. Residues H330 and E336 each contribute to the Fe cation site. The homogentisate site is built by Y345 and H366. H366 serves as a coordination point for Fe cation.

This sequence belongs to the homogentisate dioxygenase family. As to quaternary structure, hexamer; dimer of trimers. The cofactor is Fe cation.

The enzyme catalyses homogentisate + O2 = 4-maleylacetoacetate + H(+). Its pathway is amino-acid degradation; L-phenylalanine degradation; acetoacetate and fumarate from L-phenylalanine: step 4/6. In terms of biological role, involved in the catabolism of homogentisate (2,5-dihydroxyphenylacetate or 2,5-OH-PhAc), a central intermediate in the degradation of phenylalanine and tyrosine. Catalyzes the oxidative ring cleavage of the aromatic ring of homogentisate to yield maleylacetoacetate. The sequence is that of Homogentisate 1,2-dioxygenase from Pseudomonas aeruginosa (strain UCBPP-PA14).